The chain runs to 957 residues: SLIT and NTRK-like protein 5 (957 aa).

The signal sequence occupies residues 1–40; it reads MHVCCPPVTLEQDLHRKMHSWMLQTLAFAVTSLVLSCAET. The Extracellular segment spans residues 41-664; it reads IDYYGEICDN…GTGASSVPLS (624 aa). LRR repeat units lie at residues 82–103, 106–127, 130–151, 154–175, 178–199, and 201–222; these read PIYHLLLSGNLLSRLYPNEFVN, GASILHLGSNVIQDIETGAFHG, GLRRLHLNNNKLELLRDDTFLG, NLEYLQVDYNYISVIEPNAFGK, MLQVLILNDNLLSGLPNNLFRF, and PLTHLDLRGNRLKLLPYVGLLQ. N-linked (GlcNAc...) asparagine glycosylation occurs at Asn103. In terms of domain architecture, LRRCT 1 spans 235-286; the sequence is NPWNCSCELISLKDWLDSISYSALVGDVVCETPFRLHGRDLDEVSKQELCPR. The interval 317–358 is disordered; that stretch reads ATSSSAVYKPPLKPPKGTRQPNKPRVRPTSRQPSKDLGYSNY. The region spanning 365–407 is the LRRNT domain; it reads QTKSPVPLECPTACTCNLQISDLGLNVNCQERKIESIAELQPK. LRR repeat units follow at residues 410 to 431, 434 to 455, 458 to 479, 482 to 503, 506 to 527, and 529 to 550; these read NPKKMYLTENYITVVRRTDFLE, GLDLLHLGNNRISMIQDRAFGD, NLRRLYLNGNRIERLSPELFYG, SLQYLFLQYNLIREIQAGTFDP, NLQLLFLNNNQLQAMPSGVFSG, and TLLRLNLRGNSFTSLPVSGVLD. The LRRCT 2 domain maps to 563–614; sequence NPWDCTCDVVGMKLWIEQLKVGVLVDEVICKAPKKFAETYMRSIKSELLCPD. Over residues 623–632 the composition is skewed to low complexity; it reads PTPSSIQVPS. The interval 623-642 is disordered; sequence PTPSSIQVPSRTNAATPAVR. N-linked (GlcNAc...) asparagine glycosylation is present at Asn644. Residues 665–685 form a helical membrane-spanning segment; that stretch reads VLILSLLLVFIMSVFVAAGLF. Over 686-957 the chain is Cytoplasmic; that stretch reads VLVMKRRKKN…LEKQTTFSQF (272 aa). The segment at 789-844 is disordered; it reads SNHHLQQQPPPPPQQPQQQPPPQMQMQPGEEERRESHHLRSPAYSVSTIEPREDLL. Positions 796–811 are enriched in pro residues; the sequence is QPPPPPQQPQQQPPPQ.

The protein belongs to the SLITRK family. In terms of tissue distribution, in the adult, significant expression is detected only in the brain. In the embryo, expressed in the subventricular zone, cortical plate, pyramidal layer of hippocampus, thalamus and hypothalamus.

The protein resides in the membrane. In terms of biological role, suppresses neurite outgrowth. The chain is SLIT and NTRK-like protein 5 (Slitrk5) from Mus musculus (Mouse).